A 275-amino-acid chain; its full sequence is 4-hydroxy-3-methylbut-2-enyl diphosphate reductase (275 aa).

Residue cysteine 12 participates in [4Fe-4S] cluster binding. Histidine 36 and histidine 70 together coordinate (2E)-4-hydroxy-3-methylbut-2-enyl diphosphate. Positions 36 and 70 each coordinate dimethylallyl diphosphate. Residues histidine 36 and histidine 70 each coordinate isopentenyl diphosphate. Cysteine 92 serves as a coordination point for [4Fe-4S] cluster. Histidine 120 is a (2E)-4-hydroxy-3-methylbut-2-enyl diphosphate binding site. Histidine 120 is a dimethylallyl diphosphate binding site. Histidine 120 lines the isopentenyl diphosphate pocket. Catalysis depends on glutamate 122, which acts as the Proton donor. Position 157 (threonine 157) interacts with (2E)-4-hydroxy-3-methylbut-2-enyl diphosphate. Cysteine 185 is a binding site for [4Fe-4S] cluster. Serine 213, serine 214, asparagine 215, and serine 257 together coordinate (2E)-4-hydroxy-3-methylbut-2-enyl diphosphate. Dimethylallyl diphosphate contacts are provided by serine 213, serine 214, asparagine 215, and serine 257. Serine 213, serine 214, asparagine 215, and serine 257 together coordinate isopentenyl diphosphate.

This sequence belongs to the IspH family. It depends on [4Fe-4S] cluster as a cofactor.

The enzyme catalyses isopentenyl diphosphate + 2 oxidized [2Fe-2S]-[ferredoxin] + H2O = (2E)-4-hydroxy-3-methylbut-2-enyl diphosphate + 2 reduced [2Fe-2S]-[ferredoxin] + 2 H(+). It catalyses the reaction dimethylallyl diphosphate + 2 oxidized [2Fe-2S]-[ferredoxin] + H2O = (2E)-4-hydroxy-3-methylbut-2-enyl diphosphate + 2 reduced [2Fe-2S]-[ferredoxin] + 2 H(+). It functions in the pathway isoprenoid biosynthesis; dimethylallyl diphosphate biosynthesis; dimethylallyl diphosphate from (2E)-4-hydroxy-3-methylbutenyl diphosphate: step 1/1. Its pathway is isoprenoid biosynthesis; isopentenyl diphosphate biosynthesis via DXP pathway; isopentenyl diphosphate from 1-deoxy-D-xylulose 5-phosphate: step 6/6. Its function is as follows. Catalyzes the conversion of 1-hydroxy-2-methyl-2-(E)-butenyl 4-diphosphate (HMBPP) into a mixture of isopentenyl diphosphate (IPP) and dimethylallyl diphosphate (DMAPP). Acts in the terminal step of the DOXP/MEP pathway for isoprenoid precursor biosynthesis. This Nitratiruptor sp. (strain SB155-2) protein is 4-hydroxy-3-methylbut-2-enyl diphosphate reductase.